Here is a 1775-residue protein sequence, read N- to C-terminus: Stereocilin (1775 aa).

A signal peptide spans 1–22 (MALSLWPLLLLLLLLLLLSFAV). Residues asparagine 65, asparagine 202, asparagine 297, asparagine 366, asparagine 427, asparagine 476, asparagine 540, asparagine 565, asparagine 656, asparagine 824, asparagine 916, asparagine 964, asparagine 1179, and asparagine 1274 are each glycosylated (N-linked (GlcNAc...) asparagine).

The protein belongs to the stereocilin family.

Its subcellular location is the cell surface. The protein localises to the cell projection. It localises to the kinocilium. It is found in the stereocilium. Essential to the formation of horizontal top connectors between outer hair cell stereocilia. This is Stereocilin (STRC) from Homo sapiens (Human).